We begin with the raw amino-acid sequence, 697 residues long: DNA ligase (697 aa).

NAD(+) contacts are provided by residues 36–40 (DAEYD), 85–86 (SL), and Glu123. The N6-AMP-lysine intermediate role is filled by Lys125. Residues Arg146, Glu182, Lys320, and Lys344 each contribute to the NAD(+) site. Positions 438, 441, 456, and 462 each coordinate Zn(2+). The 79-residue stretch at 619–697 (PQGNTLAGKT…EDGLKALLGV (79 aa)) folds into the BRCT domain.

This sequence belongs to the NAD-dependent DNA ligase family. LigA subfamily. Mg(2+) serves as cofactor. The cofactor is Mn(2+).

It catalyses the reaction NAD(+) + (deoxyribonucleotide)n-3'-hydroxyl + 5'-phospho-(deoxyribonucleotide)m = (deoxyribonucleotide)n+m + AMP + beta-nicotinamide D-nucleotide.. Functionally, DNA ligase that catalyzes the formation of phosphodiester linkages between 5'-phosphoryl and 3'-hydroxyl groups in double-stranded DNA using NAD as a coenzyme and as the energy source for the reaction. It is essential for DNA replication and repair of damaged DNA. This Bordetella petrii (strain ATCC BAA-461 / DSM 12804 / CCUG 43448) protein is DNA ligase.